Here is a 31-residue protein sequence, read N- to C-terminus: Photosystem I reaction center subunit XII (31 aa).

Residues 7-26 (QVFLALIIALIPGILADRLG) form a helical membrane-spanning segment.

Belongs to the PsaM family.

It is found in the plastid. The protein resides in the chloroplast thylakoid membrane. This Euglena deses protein is Photosystem I reaction center subunit XII.